A 244-amino-acid chain; its full sequence is Cytochrome c1 (244 aa).

The N-terminal stretch at 1–19 (MRKLILATFLLLAPTALLA) is a signal peptide. Residues C50, C53, and H54 each contribute to the heme c site. Residues 220-240 (YVLLFLGFLFILAYLLKKEYW) form a helical membrane-spanning segment.

The main subunits of complex b-c1 are: cytochrome b, cytochrome c1 and the Rieske protein. Post-translationally, binds 1 heme c group covalently per subunit.

The protein localises to the cell membrane. In terms of biological role, component of the ubiquinol-cytochrome c reductase complex (complex III or cytochrome b-c1 complex), which is a respiratory chain that generates an electrochemical potential coupled to ATP synthesis. c1 functions as an electron donor to cytochrome c. The polypeptide is Cytochrome c1 (petC) (Allochromatium vinosum (strain ATCC 17899 / DSM 180 / NBRC 103801 / NCIMB 10441 / D) (Chromatium vinosum)).